Consider the following 361-residue polypeptide: Probable dual-specificity RNA methyltransferase RlmN (361 aa).

Glu-91 serves as the catalytic Proton acceptor. Residues 97 to 329 (QHYGLSVCVT…KKKGGNCVVR (233 aa)) form the Radical SAM core domain. A disulfide bridge links Cys-104 with Cys-340. Cys-111, Cys-115, and Cys-118 together coordinate [4Fe-4S] cluster. Residues 163–164 (GE), Ser-195, 218–220 (SLH), and Asn-296 each bind S-adenosyl-L-methionine. The S-methylcysteine intermediate role is filled by Cys-340.

The protein belongs to the radical SAM superfamily. RlmN family. It depends on [4Fe-4S] cluster as a cofactor.

Its subcellular location is the cytoplasm. The enzyme catalyses adenosine(2503) in 23S rRNA + 2 reduced [2Fe-2S]-[ferredoxin] + 2 S-adenosyl-L-methionine = 2-methyladenosine(2503) in 23S rRNA + 5'-deoxyadenosine + L-methionine + 2 oxidized [2Fe-2S]-[ferredoxin] + S-adenosyl-L-homocysteine. It carries out the reaction adenosine(37) in tRNA + 2 reduced [2Fe-2S]-[ferredoxin] + 2 S-adenosyl-L-methionine = 2-methyladenosine(37) in tRNA + 5'-deoxyadenosine + L-methionine + 2 oxidized [2Fe-2S]-[ferredoxin] + S-adenosyl-L-homocysteine. Functionally, specifically methylates position 2 of adenine 2503 in 23S rRNA and position 2 of adenine 37 in tRNAs. The protein is Probable dual-specificity RNA methyltransferase RlmN of Streptococcus pneumoniae (strain P1031).